The sequence spans 704 residues: Elongation factor G (704 aa).

A tr-type G domain is found at 8–290 (EKYRNIGICA…GVVRYLPAPN (283 aa)). GTP is bound by residues 17 to 24 (AHVDAGKT), 88 to 92 (DTPGH), and 142 to 145 (NKMD).

This sequence belongs to the TRAFAC class translation factor GTPase superfamily. Classic translation factor GTPase family. EF-G/EF-2 subfamily.

The protein localises to the cytoplasm. In terms of biological role, catalyzes the GTP-dependent ribosomal translocation step during translation elongation. During this step, the ribosome changes from the pre-translocational (PRE) to the post-translocational (POST) state as the newly formed A-site-bound peptidyl-tRNA and P-site-bound deacylated tRNA move to the P and E sites, respectively. Catalyzes the coordinated movement of the two tRNA molecules, the mRNA and conformational changes in the ribosome. In Francisella tularensis subsp. holarctica (strain FTNF002-00 / FTA), this protein is Elongation factor G.